The sequence spans 320 residues: MQNRNTFSWVKEQMTRFISVSIMIYVITRTSISNAYPIFAQQGYENPREATGRIVCANCHLANKPVDIEVPQAVLPDTVFEAVVRIPYDMQLKQVLANGKKGALNVGAVLILPEGFELAPPDRISPEMKEKIGNLSFQSYRPTKRNILVVGPVPGQKYSEIVFPILSPDPATKKDVHFLKYPIYVGGNRGRGQIYPDGNKSNNTVYNATAAGIVNRIVRKEKGGYEITIADASDGHQVVDIIPPGPELLVSEGESIKLDQPLTSNPNVGGFGQGDAEIVLQDPLRVQGLLFFLASVILAQIFLVLKKKQFEKVQLSEMNF.

The first 35 residues, methionine 1–alanine 35, serve as a signal peptide directing secretion. Positions 36, 56, 59, and 60 each coordinate heme. Residues valine 286–lysine 306 form a helical membrane-spanning segment.

Belongs to the cytochrome f family. In terms of assembly, the 4 large subunits of the cytochrome b6-f complex are cytochrome b6, subunit IV (17 kDa polypeptide, petD), cytochrome f and the Rieske protein, while the 4 small subunits are PetG, PetL, PetM and PetN. The complex functions as a dimer. Heme serves as cofactor.

It localises to the plastid. The protein resides in the chloroplast thylakoid membrane. Functionally, component of the cytochrome b6-f complex, which mediates electron transfer between photosystem II (PSII) and photosystem I (PSI), cyclic electron flow around PSI, and state transitions. This chain is Cytochrome f, found in Liriodendron tulipifera (Tuliptree).